A 585-amino-acid polypeptide reads, in one-letter code: Probable long-chain-fatty-acid--AMP ligase FadD30 (585 aa).

This sequence belongs to the ATP-dependent AMP-binding enzyme family.

It participates in lipid metabolism; fatty acid biosynthesis. Functionally, catalyzes the activation of long-chain fatty acids as acyl-adenylates (acyl-AMP), which are then transferred to a multifunctional polyketide synthase (PKS) for further chain extension. In Mycobacterium tuberculosis (strain CDC 1551 / Oshkosh), this protein is Probable long-chain-fatty-acid--AMP ligase FadD30 (fadD30).